Reading from the N-terminus, the 125-residue chain is UPF0102 protein PSPA7_4996 (125 aa).

This sequence belongs to the UPF0102 family.

The chain is UPF0102 protein PSPA7_4996 from Pseudomonas paraeruginosa (strain DSM 24068 / PA7) (Pseudomonas aeruginosa (strain PA7)).